Reading from the N-terminus, the 333-residue chain is Nucleoid-associated protein VC0395_A1624/VC395_2154 (333 aa).

Belongs to the YejK family.

The protein localises to the cytoplasm. Its subcellular location is the nucleoid. This is Nucleoid-associated protein VC0395_A1624/VC395_2154 from Vibrio cholerae serotype O1 (strain ATCC 39541 / Classical Ogawa 395 / O395).